We begin with the raw amino-acid sequence, 457 residues long: Bifunctional protein GlmU (457 aa).

Positions 1-230 (MSKRYAVVLA…FEESLGVNDR (230 aa)) are pyrophosphorylase. Residues 9-12 (LAAG), lysine 23, glutamine 73, and 78-79 (GT) contribute to the UDP-N-acetyl-alpha-D-glucosamine site. Mg(2+) is bound at residue aspartate 103. UDP-N-acetyl-alpha-D-glucosamine contacts are provided by glycine 140, glutamate 155, asparagine 170, and asparagine 228. Asparagine 228 is a Mg(2+) binding site. The interval 231-251 (IALAEASKLMQRRINDNHMRN) is linker. The segment at 252–457 (GVTLVNPENT…DYAKRLNHGK (206 aa)) is N-acetyltransferase. UDP-N-acetyl-alpha-D-glucosamine is bound by residues arginine 333 and lysine 351. Catalysis depends on histidine 363, which acts as the Proton acceptor. Tyrosine 366 and asparagine 377 together coordinate UDP-N-acetyl-alpha-D-glucosamine. Residues 386 to 387 (NY), alanine 423, and arginine 440 contribute to the acetyl-CoA site.

The protein in the N-terminal section; belongs to the N-acetylglucosamine-1-phosphate uridyltransferase family. It in the C-terminal section; belongs to the transferase hexapeptide repeat family. As to quaternary structure, homotrimer. The cofactor is Mg(2+).

The protein resides in the cytoplasm. The catalysed reaction is alpha-D-glucosamine 1-phosphate + acetyl-CoA = N-acetyl-alpha-D-glucosamine 1-phosphate + CoA + H(+). It catalyses the reaction N-acetyl-alpha-D-glucosamine 1-phosphate + UTP + H(+) = UDP-N-acetyl-alpha-D-glucosamine + diphosphate. It functions in the pathway nucleotide-sugar biosynthesis; UDP-N-acetyl-alpha-D-glucosamine biosynthesis; N-acetyl-alpha-D-glucosamine 1-phosphate from alpha-D-glucosamine 6-phosphate (route II): step 2/2. It participates in nucleotide-sugar biosynthesis; UDP-N-acetyl-alpha-D-glucosamine biosynthesis; UDP-N-acetyl-alpha-D-glucosamine from N-acetyl-alpha-D-glucosamine 1-phosphate: step 1/1. The protein operates within bacterial outer membrane biogenesis; LPS lipid A biosynthesis. In terms of biological role, catalyzes the last two sequential reactions in the de novo biosynthetic pathway for UDP-N-acetylglucosamine (UDP-GlcNAc). The C-terminal domain catalyzes the transfer of acetyl group from acetyl coenzyme A to glucosamine-1-phosphate (GlcN-1-P) to produce N-acetylglucosamine-1-phosphate (GlcNAc-1-P), which is converted into UDP-GlcNAc by the transfer of uridine 5-monophosphate (from uridine 5-triphosphate), a reaction catalyzed by the N-terminal domain. In Listeria welshimeri serovar 6b (strain ATCC 35897 / DSM 20650 / CCUG 15529 / CIP 8149 / NCTC 11857 / SLCC 5334 / V8), this protein is Bifunctional protein GlmU.